We begin with the raw amino-acid sequence, 80 residues long: Dermaseptin-DA3 (80 aa).

The signal sequence occupies residues 1–22 (MAFLKKSLFLVLFLGLVSLSIC). Positions 23–42 (EEKRENEDEEEQEDDEQSEE) are excised as a propeptide. A disordered region spans residues 24–48 (EKRENEDEEEQEDDEQSEEKRGMWS). Positions 29–40 (EDEEEQEDDEQS) are enriched in acidic residues. At Leu77 the chain carries Leucine amide. Residues 79 to 80 (EQ) constitute a propeptide that is removed on maturation.

Belongs to the frog skin active peptide (FSAP) family. Dermaseptin subfamily. In terms of tissue distribution, expressed by the skin glands.

The protein localises to the secreted. Possesses a potent antimicrobial activity against Gram-positive and Gram-negative bacteria. Probably acts by disturbing membrane functions with its amphipathic structure. The chain is Dermaseptin-DA3 from Agalychnis dacnicolor (Giant Mexican leaf frog).